Here is a 366-residue protein sequence, read N- to C-terminus: Adenosine deaminase (366 aa).

Zn(2+) is bound by residues His-19 and His-21. 3 residues coordinate substrate: His-21, Asp-23, and Gly-181. His-208 lines the Zn(2+) pocket. Catalysis depends on Glu-211, which acts as the Proton donor. Asp-304 contributes to the Zn(2+) binding site.

The protein belongs to the metallo-dependent hydrolases superfamily. Adenosine and AMP deaminases family. Adenosine deaminase subfamily. The cofactor is Zn(2+).

It carries out the reaction adenosine + H2O + H(+) = inosine + NH4(+). It catalyses the reaction 2'-deoxyadenosine + H2O + H(+) = 2'-deoxyinosine + NH4(+). Its function is as follows. Catalyzes the hydrolytic deamination of adenosine and 2-deoxyadenosine. The polypeptide is Adenosine deaminase (Mycobacterium avium (strain 104)).